The primary structure comprises 125 residues: Unclassified hydrophobin 8 (125 aa).

The N-terminal stretch at Met-1–Ala-20 is a signal peptide. 4 cysteine pairs are disulfide-bonded: Cys-31-Cys-105, Cys-38-Cys-99, Cys-39-Cys-90, and Cys-106-Cys-119.

It belongs to the fungal hydrophobin family. In terms of assembly, self-assembles to form functional amyloid fibrils called rodlets. Self-assembly into fibrillar rodlets occurs spontaneously at hydrophobic:hydrophilic interfaces and the rodlets further associate laterally to form amphipathic monolayers.

Its subcellular location is the secreted. It localises to the cell wall. Its function is as follows. Aerial growth, conidiation, and dispersal of filamentous fungi in the environment rely upon a capability of their secreting small amphipathic proteins called hydrophobins (HPBs) with low sequence identity. Class I can self-assemble into an outermost layer of rodlet bundles on aerial cell surfaces, conferring cellular hydrophobicity that supports fungal growth, development and dispersal; whereas Class II form highly ordered films at water-air interfaces through intermolecular interactions but contribute nothing to the rodlet structure. Hydph8 is an unclassified hydrophobin involved in mycelial growth. This Pleurotus ostreatus (strain PC15) (Oyster mushroom) protein is Unclassified hydrophobin 8.